The primary structure comprises 61 residues: Potassium channel toxin alpha-KTx 6.8 (61 aa).

An N-terminal signal peptide occupies residues 1–23; sequence MNAKFILLLLVVTTTILLPDTQG. Intrachain disulfides connect Cys29/Cys50, Cys35/Cys55, Cys39/Cys57, and Cys45/Cys60. A Cysteine amide modification is found at Cys60.

This sequence belongs to the short scorpion toxin superfamily. Potassium channel inhibitor family. Alpha-KTx 06 subfamily. As to expression, expressed by the venom gland.

Its subcellular location is the secreted. Functionally, blocker of voltage-gated potassium channels. This is Potassium channel toxin alpha-KTx 6.8 from Opistophthalmus carinatus (African yellow leg scorpion).